A 1224-amino-acid polypeptide reads, in one-letter code: DNA-directed RNA polymerase subunit beta'' (1224 aa).

Residues cysteine 233, cysteine 308, cysteine 315, and cysteine 318 each contribute to the Zn(2+) site.

Belongs to the RNA polymerase beta' chain family. RpoC2 subfamily. In plastids the minimal PEP RNA polymerase catalytic core is composed of four subunits: alpha, beta, beta', and beta''. When a (nuclear-encoded) sigma factor is associated with the core the holoenzyme is formed, which can initiate transcription. Zn(2+) is required as a cofactor.

Its subcellular location is the plastid. It localises to the chloroplast. It catalyses the reaction RNA(n) + a ribonucleoside 5'-triphosphate = RNA(n+1) + diphosphate. Its function is as follows. DNA-dependent RNA polymerase catalyzes the transcription of DNA into RNA using the four ribonucleoside triphosphates as substrates. The sequence is that of DNA-directed RNA polymerase subunit beta'' from Pinus thunbergii (Japanese black pine).